A 73-amino-acid polypeptide reads, in one-letter code: Signaling peptide TAXIMIN 2 (73 aa).

Positions 1-27 (MGDCRPLGFLIGLPFALVALVLALVGA) are cleaved as a signal peptide.

In terms of tissue distribution, confined to the vasculature of various organs, including seedling roots, leaves, cotyledons, sepals and petals. Also accumulates in root hair cells.

It localises to the secreted. Signaling peptide involved in the regulation of lateral organs separation. This Arabidopsis thaliana (Mouse-ear cress) protein is Signaling peptide TAXIMIN 2.